Reading from the N-terminus, the 698-residue chain is MNLLPKSSKEFGSADYWEKFFQQRGKTAFEWYGTYLELCEVLHKYIKPKEKVLVIGCGNSELSEQLYDVGYQDIVNIDISEVVIKQMKERNGSRRPHMSFLKMDMTQLEFPDATFQVVLDKGTLDAVLTDEEEVTLRQVDRMLAEVGRVLQVGGRYLCISLAQAHILKKAVGHFSREGWMVRAHQVASSQDRVSEAEPRFSLPVFAFVMTKFRPVPGSALQIFELCTQEQGKPVRLESADQLAEAVRERQYYAWLCSQLRRKAGLGSVSLDLCSGDTGEPRYTLHVVDNPAVKPSRDNHFAIFIIPQGRETEWLFGMEEGRKQLAASAGFRRLVTVALHRGQRYAGMESIQAELSARVMELAPAGLPPQQQVPFLSVGGDIGVRTVQHQDHSALSGDYVIEDVQGEDRWYFRRLIFLSNRNVVQSEARLLKDTSHRAQKKRKKDRKKQRPADTSEDFPPAPGQSIDKSYLCCEHHKAMVAGLALLRNPELLLETPLTLLVVGLGGGSLPLFVHDHFPKSRIDAVEIDPTMLEVATQWFGFSQSDRMKVHIADGLDYITSLAGEAPPHYDVIMFDVDSKDPTLGMSCPPPAFVDQVFLQKVKSILCHDGVFILNLVCRDVRLKDSVLAGLKAAFPLLYVRRIEGEVNEILFCQLHPEQKLATPELLEMAQVLERTLRKPGQGWDDTYVLSDMLKTVKIV.

Met-1 carries the post-translational modification N-acetylmethionine. Ser-267 is subject to Phosphoserine. Residues 431–461 (KDTSHRAQKKRKKDRKKQRPADTSEDFPPAP) form a disordered region. Residues 436-448 (RAQKKRKKDRKKQ) are compositionally biased toward basic residues.

It belongs to the methyltransferase superfamily. In terms of assembly, forms a tripartite complex containing GAB1, METTL13 and SPRY2. Within the complex interacts with GAB1 and SPRY2. In terms of tissue distribution, expressed in the inner ear (at protein level). Expression is detected in the cochlear duct, spiral limbus region, efferent and afferent nerves, and in spiral ganglion neurons (at protein level).

It is found in the cytoplasm. Its subcellular location is the nucleus. It localises to the mitochondrion. The catalysed reaction is L-lysyl-[protein] + S-adenosyl-L-methionine = N(6)-methyl-L-lysyl-[protein] + S-adenosyl-L-homocysteine + H(+). The enzyme catalyses N(6)-methyl-L-lysyl-[protein] + S-adenosyl-L-methionine = N(6),N(6)-dimethyl-L-lysyl-[protein] + S-adenosyl-L-homocysteine + H(+). It catalyses the reaction N-terminal glycyl-L-lysyl-L-glutamyl-[protein] + 3 S-adenosyl-L-methionine = N-terminal N,N,N-trimethyl-glycyl-L-lysyl-L-glutamyl-[protein] + 3 S-adenosyl-L-homocysteine + 3 H(+). Its function is as follows. Dual methyltransferase that catalyzes methylation of elongation factor 1-alpha (EEF1A1 and EEF1A2) at two different positions, and is therefore involved in the regulation of mRNA translation. Via its C-terminus, methylates EEF1A1 and EEF1A2 at the N-terminal residue 'Gly-2'. Via its N-terminus dimethylates EEF1A1 and EEF1A2 at residue 'Lys-55'. Has no activity towards core histones H2A, H2B, H3 and H4. In Mus musculus (Mouse), this protein is eEF1A lysine and N-terminal methyltransferase.